Reading from the N-terminus, the 110-residue chain is Large ribosomal subunit protein uL22 (110 aa).

It belongs to the universal ribosomal protein uL22 family. Part of the 50S ribosomal subunit.

In terms of biological role, this protein binds specifically to 23S rRNA; its binding is stimulated by other ribosomal proteins, e.g. L4, L17, and L20. It is important during the early stages of 50S assembly. It makes multiple contacts with different domains of the 23S rRNA in the assembled 50S subunit and ribosome. Its function is as follows. The globular domain of the protein is located near the polypeptide exit tunnel on the outside of the subunit, while an extended beta-hairpin is found that lines the wall of the exit tunnel in the center of the 70S ribosome. The protein is Large ribosomal subunit protein uL22 of Histophilus somni (strain 129Pt) (Haemophilus somnus).